Reading from the N-terminus, the 190-residue chain is Potassium-transporting ATPase KdpC subunit (190 aa).

The helical transmembrane segment at 10–30 threads the bilayer; the sequence is TFLFLLLITGGVYPLLTTALG.

It belongs to the KdpC family. In terms of assembly, the system is composed of three essential subunits: KdpA, KdpB and KdpC.

The protein localises to the cell inner membrane. In terms of biological role, part of the high-affinity ATP-driven potassium transport (or Kdp) system, which catalyzes the hydrolysis of ATP coupled with the electrogenic transport of potassium into the cytoplasm. This subunit acts as a catalytic chaperone that increases the ATP-binding affinity of the ATP-hydrolyzing subunit KdpB by the formation of a transient KdpB/KdpC/ATP ternary complex. In Shigella flexneri serotype 5b (strain 8401), this protein is Potassium-transporting ATPase KdpC subunit.